A 225-amino-acid chain; its full sequence is MSRPRKRLAGTSGSDKGLSGKRTKTENSGEALAKVEDSNPQKTSATKNCLKNLSSHWLMKSEPESRLEKGVDVKFSIEDLKAQPKQTTCWDGVRNYQARNFLRAMKLGEEAFFYHSNCKEPGIAGLMKIVKEAYPDHTQFEKNNPHYDPSSKEDNPKWSMVDVQFVRMMKRFIPLAELKSYHQAHKATGGPLKNMVLFTRQRLSIQPLTQEEFDFVLSLEEKEPS.

The tract at residues 1 to 47 is disordered; it reads MSRPRKRLAGTSGSDKGLSGKRTKTENSGEALAKVEDSNPQKTSATK. The Nuclear localization signal signature appears at 5–10; it reads RKRLAG. A compositionally biased stretch (basic and acidic residues) spans 23-39; it reads TKTENSGEALAKVEDSN.

Phosphorylated.

It localises to the nucleus. Its function is as follows. Specifically binds 5-hydroxymethylcytosine (5hmC), suggesting that it acts as a specific reader of 5hmC. This is Thymocyte nuclear protein 1 (THYN1) from Homo sapiens (Human).